A 663-amino-acid polypeptide reads, in one-letter code: Transketolase 2 (663 aa).

H25 provides a ligand contact to substrate. Thiamine diphosphate is bound by residues H65 and G113–L115. Mg(2+) is bound at residue D154. The thiamine diphosphate site is built by G155 and N184. N184 and I186 together coordinate Mg(2+). H259, R356, and S383 together coordinate substrate. Position 259 (H259) interacts with thiamine diphosphate. E410 (proton donor) is an active-site residue. F436 contributes to the thiamine diphosphate binding site. Substrate contacts are provided by H460, D468, and R519.

The protein belongs to the transketolase family. As to quaternary structure, homodimer. Requires Mg(2+) as cofactor. Ca(2+) serves as cofactor. It depends on Mn(2+) as a cofactor. Co(2+) is required as a cofactor. The cofactor is thiamine diphosphate.

It catalyses the reaction D-sedoheptulose 7-phosphate + D-glyceraldehyde 3-phosphate = aldehydo-D-ribose 5-phosphate + D-xylulose 5-phosphate. Catalyzes the transfer of a two-carbon ketol group from a ketose donor to an aldose acceptor, via a covalent intermediate with the cofactor thiamine pyrophosphate. The chain is Transketolase 2 (tkt2) from Aliivibrio fischeri (strain ATCC 700601 / ES114) (Vibrio fischeri).